Consider the following 582-residue polypeptide: BTB/POZ domain and ankyrin repeat-containing protein NPR1 (582 aa).

Polar residues predominate over residues 1-12 (MEPPTSHVTNAF). Residues 1-27 (MEPPTSHVTNAFSDSDSASVEEGDADA) form a disordered region. The BTB domain occupies 55–140 (ADARIAVPGG…VLDYLYSGRV (86 aa)). The C2HC NPR-type zinc finger occupies 147-161 (ACLCVDEDCAHVGCH). Cys-150, Cys-155, His-157, and Cys-160 together coordinate Zn(2+). 4 ANK repeats span residues 229-258 (RSNL…SLGL), 269-299 (KHVR…NLDD), 301-328 (FALH…DVNH), and 332-361 (RGYT…RPAD). The tract at residues 391–526 (PSPKDRLCIE…VLDKIMDDET (136 aa)) is salicylic acid-binding core (SBC). Arg-436 lines the salicylate pocket. Disordered stretches follow at residues 525–544 (ETDP…KRFH) and 551–582 (QKAF…RPRR). Residues 553 to 563 (AFHEDKEENDR) show a composition bias toward basic and acidic residues. The span at 564–574 (SGLSSSSSSTS) shows a compositional bias: low complexity.

The protein belongs to the plant 'ANKYRIN-BTB/POZ' family. 'NPR1-like' subfamily. As to quaternary structure, oligomer in an uninduced state; disulfide-linked. Forms activated monomer upon changes in cellular redox potential. Interacts with TGA2.2. Interacts with NRR.

It localises to the cytoplasm. Its subcellular location is the nucleus. The protein localises to the nuclear body. It participates in protein modification; protein ubiquitination. In terms of biological role, salicylic acid (SA)-binding substrate-specific adapter of an E3 ubiquitin-protein ligase complex (CUL3-RBX1-BTB) which mediates the ubiquitination and subsequent proteasomal degradation of target proteins. Transcription cofactor that represses gene expression in the absence of salicylic acid (SA), when attached to negative cis-elements (W-box) with WRKY transcription factors, but stimulates gene expression upon activation by SA, when sumoylated and attached to positive cis-elements (as-1) with TGA transcription factors, thus confering immunity through a series of gene regulations ending in a significant increase in antimicrobial and defense genes expression. Key positive factor of disease resistance. Involved in defense response against the bacterial blight disease caused by Xanthomonas oryzae pv. oryzae (Xoo). Plants over-expressing NPR1/NH1 acquire high levels of resistance to Xoo, express constitutively defense genes and develop lesion-mimic spots on leaves at pre-flowering stage. Involved in basal resistance to the blast pathogen Magnaporthe oryzae. Plants over-expressing NPR1/NH1 have increased resistance to M.oryzae infection. Plays an essential role in benzothiadiazole (BTH)-induced resistance to the blast fungus disease caused by Magnaporthe oryzae. Functions as a transcriptional coactivator of TGA2.1 and LG2 in vitro. Involved in defense response against herbivore. Plants silencing NPR1/NH1 have increased herbivore-induced trypsin proteinase inhibitors and volatiles, which reduces the performance of the striped stem borer (SSB) Chilo suppressalis. In Oryza sativa subsp. indica (Rice), this protein is BTB/POZ domain and ankyrin repeat-containing protein NPR1.